Reading from the N-terminus, the 519-residue chain is Probable cytosol aminopeptidase (519 aa).

Mn(2+) contacts are provided by Lys-283 and Asp-288. The active site involves Lys-295. Mn(2+) is bound by residues Asp-306, Asp-365, and Glu-367. Residue Arg-369 is part of the active site.

Belongs to the peptidase M17 family. Mn(2+) serves as cofactor.

The protein resides in the cytoplasm. The enzyme catalyses Release of an N-terminal amino acid, Xaa-|-Yaa-, in which Xaa is preferably Leu, but may be other amino acids including Pro although not Arg or Lys, and Yaa may be Pro. Amino acid amides and methyl esters are also readily hydrolyzed, but rates on arylamides are exceedingly low.. It catalyses the reaction Release of an N-terminal amino acid, preferentially leucine, but not glutamic or aspartic acids.. In terms of biological role, presumably involved in the processing and regular turnover of intracellular proteins. Catalyzes the removal of unsubstituted N-terminal amino acids from various peptides. The polypeptide is Probable cytosol aminopeptidase (Mycobacterium marinum (strain ATCC BAA-535 / M)).